We begin with the raw amino-acid sequence, 246 residues long: Protein SRL3 (246 aa).

Residues 49–61 are compositionally biased toward polar residues; sequence SISEAQDSPTSAP. Disordered regions lie at residues 49 to 68 and 200 to 229; these read SISEAQDSPTSAPSPDGNED and HAKSNRVDNVNVSPLRWSSHRRTQSTQENS. Serine 212 is subject to Phosphoserine.

In terms of assembly, interacts with CLN2. Post-translationally, phosphorylated by CDC28, probably in association with G1 cyclin CLN2.

Its subcellular location is the cytoplasm. Functionally, weakly suppresses a RAD53 null mutation when overexpressed. The chain is Protein SRL3 (SRL3) from Saccharomyces cerevisiae (strain ATCC 204508 / S288c) (Baker's yeast).